Reading from the N-terminus, the 184-residue chain is ATP synthase subunit b, chloroplastic (184 aa).

The chain crosses the membrane as a helical span at residues 27–49 (FATNPINLSVVLGVLIFFGKGVL).

It belongs to the ATPase B chain family. In terms of assembly, F-type ATPases have 2 components, F(1) - the catalytic core - and F(0) - the membrane proton channel. F(1) has five subunits: alpha(3), beta(3), gamma(1), delta(1), epsilon(1). F(0) has four main subunits: a(1), b(1), b'(1) and c(10-14). The alpha and beta chains form an alternating ring which encloses part of the gamma chain. F(1) is attached to F(0) by a central stalk formed by the gamma and epsilon chains, while a peripheral stalk is formed by the delta, b and b' chains.

Its subcellular location is the plastid. The protein localises to the chloroplast thylakoid membrane. In terms of biological role, f(1)F(0) ATP synthase produces ATP from ADP in the presence of a proton or sodium gradient. F-type ATPases consist of two structural domains, F(1) containing the extramembraneous catalytic core and F(0) containing the membrane proton channel, linked together by a central stalk and a peripheral stalk. During catalysis, ATP synthesis in the catalytic domain of F(1) is coupled via a rotary mechanism of the central stalk subunits to proton translocation. Functionally, component of the F(0) channel, it forms part of the peripheral stalk, linking F(1) to F(0). The polypeptide is ATP synthase subunit b, chloroplastic (Ipomoea purpurea (Common morning glory)).